Consider the following 168-residue polypeptide: MAGMGPPNSAPLPSSFDENADFYNENTIDKIWRRFREEPLIPFGCGLTAWAIVGASRSMRKGDHKMTNLYFRRRLYAQSFTIAVLVIGNLYWQKDRVKRKDYERMKAETERKEKRDRWLRELEMRDEEDKAWKERLAKKTRGAADEAKGVTDMVAEKTKELKDQTLGK.

In terms of domain architecture, HIG1 spans 12 to 103 (LPSSFDENAD…KDRVKRKDYE (92 aa)). The next 2 helical transmembrane spans lie at 40–56 (LIPF…VGAS) and 75–92 (LYAQ…NLYW).

This sequence belongs to the RCF1 family. Associates with the respiratory chain complex III/complex IV supercomplex.

The protein resides in the mitochondrion membrane. Cytochrome c oxidase subunit which plays a role in assembly of respiratory supercomplexes. This chain is Respiratory supercomplex factor 1, mitochondrial (RCF1), found in Phaeosphaeria nodorum (strain SN15 / ATCC MYA-4574 / FGSC 10173) (Glume blotch fungus).